The primary structure comprises 313 residues: 2,3-dihydroxyphenylpropionate/2,3-dihydroxicinnamic acid 1,2-dioxygenase (313 aa).

The active-site Proton donor is histidine 115. The active-site Proton acceptor is histidine 179.

Belongs to the LigB/MhpB extradiol dioxygenase family. In terms of assembly, homotetramer. Fe(2+) serves as cofactor.

It catalyses the reaction 3-(2,3-dihydroxyphenyl)propanoate + O2 = (2Z,4E)-2-hydroxy-6-oxonona-2,4-dienedioate + H(+). It carries out the reaction (2E)-3-(2,3-dihydroxyphenyl)prop-2-enoate + O2 = (2Z,4E,7E)-2-hydroxy-6-oxonona-2,4,7-trienedioate + H(+). Its pathway is aromatic compound metabolism; 3-phenylpropanoate degradation. Its function is as follows. Catalyzes the non-heme iron(II)-dependent oxidative cleavage of 2,3-dihydroxyphenylpropionic acid and 2,3-dihydroxicinnamic acid into 2-hydroxy-6-ketononadienedioate and 2-hydroxy-6-ketononatrienedioate, respectively. This Mycobacterium ulcerans (strain Agy99) protein is 2,3-dihydroxyphenylpropionate/2,3-dihydroxicinnamic acid 1,2-dioxygenase.